The following is a 139-amino-acid chain: Transcription antitermination protein NusB (139 aa).

Belongs to the NusB family.

Functionally, involved in transcription antitermination. Required for transcription of ribosomal RNA (rRNA) genes. Binds specifically to the boxA antiterminator sequence of the ribosomal RNA (rrn) operons. This is Transcription antitermination protein NusB from Escherichia coli (strain K12 / MC4100 / BW2952).